The sequence spans 346 residues: Thiamine-phosphate synthase (346 aa).

The interval 1–125 (MSVTPNPDQH…SKISAQIRYE (125 aa)) is unknown. The interval 126–346 (IYDLEVIILK…SKELLGKLKK (221 aa)) is thiamine-phosphate synthase. 4-amino-2-methyl-5-(diphosphooxymethyl)pyrimidine is bound by residues 177 to 181 (QYRCK) and asparagine 209. Mg(2+) contacts are provided by aspartate 210 and aspartate 229. Residue serine 248 participates in 4-amino-2-methyl-5-(diphosphooxymethyl)pyrimidine binding. 2-[(2R,5Z)-2-carboxy-4-methylthiazol-5(2H)-ylidene]ethyl phosphate is bound at residue 274–276 (TKS). A 4-amino-2-methyl-5-(diphosphooxymethyl)pyrimidine-binding site is contributed by lysine 277. Residue glycine 304 coordinates 2-[(2R,5Z)-2-carboxy-4-methylthiazol-5(2H)-ylidene]ethyl phosphate.

It belongs to the thiamine-phosphate synthase family. Mg(2+) serves as cofactor.

It carries out the reaction 2-[(2R,5Z)-2-carboxy-4-methylthiazol-5(2H)-ylidene]ethyl phosphate + 4-amino-2-methyl-5-(diphosphooxymethyl)pyrimidine + 2 H(+) = thiamine phosphate + CO2 + diphosphate. The catalysed reaction is 2-(2-carboxy-4-methylthiazol-5-yl)ethyl phosphate + 4-amino-2-methyl-5-(diphosphooxymethyl)pyrimidine + 2 H(+) = thiamine phosphate + CO2 + diphosphate. The enzyme catalyses 4-methyl-5-(2-phosphooxyethyl)-thiazole + 4-amino-2-methyl-5-(diphosphooxymethyl)pyrimidine + H(+) = thiamine phosphate + diphosphate. Its pathway is cofactor biosynthesis; thiamine diphosphate biosynthesis; thiamine phosphate from 4-amino-2-methyl-5-diphosphomethylpyrimidine and 4-methyl-5-(2-phosphoethyl)-thiazole: step 1/1. In terms of biological role, condenses 4-methyl-5-(beta-hydroxyethyl)thiazole monophosphate (THZ-P) and 2-methyl-4-amino-5-hydroxymethyl pyrimidine pyrophosphate (HMP-PP) to form thiamine monophosphate (TMP). This Prochlorococcus marinus (strain SARG / CCMP1375 / SS120) protein is Thiamine-phosphate synthase.